A 533-amino-acid polypeptide reads, in one-letter code: MAKKRIAVIGSGASGLTCIKCCLEEGLEPVCFERSDDIGGLWRYQENPEKGRASIYKSVIINTSKEMMCFSDYPIPDHYPNFMHNSQVLEYFRMYAKEFGLLKYIQFKTTVCSVKKQPDFSTSGQWQVVTEHEGKQQVDVFDGVLVCTGHHTDPHLPLDSFPGIEKFKGKYFHSREYKNPVEFTGKRVIVIGIGNSGGDLAVEISHTAKQVFLSTRRGAWILNRVGKRGYPIDILLSSRITNYLSKICGSALKNRYMEKQLNQRFDHEMFGLKPKHSALGQHPTINDDLPNRIISGLVKVKGNVKEFTETAAIFEDGSREDDIDVVIFATGYSFAFPFLEDSVKVVQNKVSLYKKVFPPNLEKPTLAIIGLIQPLGAIMPISELQGRWATQVFKGLKKLPSQSEMMAEINKTREEMAKRYVDSQRHTIQGDYIDTMEEIADLVGVRPNLLSLAFTDPKLAFQLLVGPCTPVQYRLQGPGKWAGARKTILTTEDRIRKPLMTRVVERDSSGTSLVTVRVLMLAVTFLAVILAYF.

At Arg-5 the chain carries Dimethylated arginine. FAD-binding positions include 10–14 (GSGAS), Glu-33, and 41–42 (LW). A Phosphoserine modification is found at Ser-54. A Phosphotyrosine modification is found at Tyr-56. At Ser-58 the chain carries Phosphoserine. 62-63 (NT) serves as a coordination point for FAD. Position 196–199 (196–199 (SGGD)) interacts with NADP(+). Phosphothreonine is present on Thr-284. Phosphoserine is present on Ser-401. A helical transmembrane segment spans residues 513–533 (LVTVRVLMLAVTFLAVILAYF).

Belongs to the FMO family. FAD serves as cofactor.

It is found in the microsome membrane. Its subcellular location is the endoplasmic reticulum membrane. The catalysed reaction is N,N-dimethylaniline + NADPH + O2 + H(+) = N,N-dimethylaniline N-oxide + NADP(+) + H2O. It carries out the reaction NADPH + O2 + H(+) = H2O2 + NADP(+). The enzyme catalyses heptan-2-one + NADPH + O2 + H(+) = pentyl acetate + NADP(+) + H2O. It catalyses the reaction octan-3-one + NADPH + O2 + H(+) = pentyl propanoate + NADP(+) + H2O. The catalysed reaction is octan-3-one + NADPH + O2 + H(+) = ethyl hexanoate + NADP(+) + H2O. It carries out the reaction hexan-3-one + NADPH + O2 + H(+) = ethyl butanoate + NADP(+) + H2O. The enzyme catalyses hexan-3-one + NADPH + O2 + H(+) = propyl propanoate + NADP(+) + H2O. It catalyses the reaction heptan-4-one + NADPH + O2 + H(+) = propyl butanoate + NADP(+) + H2O. The catalysed reaction is (2E)-geranial + NADPH + O2 + H(+) = (1E)-2,6-dimethylhepta-1,5-dien-1-yl formate + NADP(+) + H2O. It carries out the reaction sulcatone + NADPH + O2 + H(+) = 4-methylpent-3-en-1-yl acetate + NADP(+) + H2O. Acts as a Baeyer-Villiger monooxygenase on a broad range of substrates. Catalyzes the insertion of an oxygen atom into a carbon-carbon bond adjacent to a carbonyl, which converts ketones to esters. Active on diverse carbonyl compounds, whereas soft nucleophiles are mostly non- or poorly reactive. In contrast with other forms of FMO it is non- or poorly active on 'classical' substrates such as drugs, pesticides, and dietary components containing soft nucleophilic heteroatoms. Able to oxidize drug molecules bearing a carbonyl group on an aliphatic chain, such as nabumetone and pentoxifylline. Also, in the absence of substrates, shows slow but yet significant NADPH oxidase activity. Acts as a positive modulator of cholesterol biosynthesis as well as glucose homeostasis, promoting metabolic aging via pleiotropic effects. This is Flavin-containing monooxygenase 5 from Rattus norvegicus (Rat).